Reading from the N-terminus, the 192-residue chain is 7-methyl-GTP pyrophosphatase (192 aa).

Aspartate 69 acts as the Proton acceptor in catalysis.

It belongs to the Maf family. YceF subfamily. It depends on a divalent metal cation as a cofactor.

The protein localises to the cytoplasm. It carries out the reaction N(7)-methyl-GTP + H2O = N(7)-methyl-GMP + diphosphate + H(+). Nucleoside triphosphate pyrophosphatase that hydrolyzes 7-methyl-GTP (m(7)GTP). May have a dual role in cell division arrest and in preventing the incorporation of modified nucleotides into cellular nucleic acids. This is 7-methyl-GTP pyrophosphatase (maf-1) from Pseudomonas syringae pv. tomato (strain ATCC BAA-871 / DC3000).